Here is a 218-residue protein sequence, read N- to C-terminus: Thiopurine S-methyltransferase (218 aa).

S-adenosyl-L-methionine-binding residues include Trp10, Leu45, Glu66, and Arg123.

Belongs to the class I-like SAM-binding methyltransferase superfamily. TPMT family.

The protein resides in the cytoplasm. It carries out the reaction S-adenosyl-L-methionine + a thiopurine = S-adenosyl-L-homocysteine + a thiopurine S-methylether.. The chain is Thiopurine S-methyltransferase from Shewanella baltica (strain OS223).